The chain runs to 158 residues: Ribosome association toxin RatA (158 aa).

The protein belongs to the ribosome association toxin RatA family. In terms of assembly, associates with 50S ribosomes.

Its function is as follows. Toxic component of a type II toxin-antitoxin (TA) system. Binds to 50S ribosomal subunits, preventing them from associating with 30S subunits to form 70S ribosomes and reducing polysomes. It does not cause ribosomes to dissociate however. The antibiotic paromomycin blocks the anti-association activity of RatA. Overexpression results in inhibition of growth in liquid cultures, and in a decrease in protein translation. The other gene of this operon, ratB, is not the cognate antitoxin in this strain; in CFT073 however it does fulfill this function. In terms of biological role, low level expression in a deletion mutant increases resistance to acidified sodium nitrate which causes nitrosative stress. The chain is Ribosome association toxin RatA (ratA) from Escherichia coli (strain K12).